Consider the following 257-residue polypeptide: Pimeloyl-[acyl-carrier protein] methyl ester esterase (257 aa).

In terms of domain architecture, AB hydrolase-1 spans 16 to 240 (LVLIHGWGMN…EQASHAPFIS (225 aa)). Substrate contacts are provided by residues W22, 82–83 (SL), and 143–147 (FMALQ). S82 functions as the Nucleophile in the catalytic mechanism. Active-site residues include D207 and H235. H235 is a substrate binding site.

Belongs to the AB hydrolase superfamily. Carboxylesterase BioH family. In terms of assembly, monomer.

It is found in the cytoplasm. The catalysed reaction is 6-carboxyhexanoyl-[ACP] methyl ester + H2O = 6-carboxyhexanoyl-[ACP] + methanol + H(+). It functions in the pathway cofactor biosynthesis; biotin biosynthesis. The physiological role of BioH is to remove the methyl group introduced by BioC when the pimeloyl moiety is complete. It allows to synthesize pimeloyl-ACP via the fatty acid synthetic pathway through the hydrolysis of the ester bonds of pimeloyl-ACP esters. The sequence is that of Pimeloyl-[acyl-carrier protein] methyl ester esterase from Aliivibrio fischeri (strain ATCC 700601 / ES114) (Vibrio fischeri).